A 449-amino-acid polypeptide reads, in one-letter code: Nucleoprotein (449 aa).

Residues 1–55 (MSFTPGKQSSSRASSGNRSGNGILKWADQSDQSRNVQTRGRRVQSKQTATSQQPS) form a disordered region. Low complexity predominate over residues 9–22 (SSSRASSGNRSGNG). Polar residues-rich tracts occupy residues 29–38 (QSDQSRNVQT) and 45–55 (SKQTATSQQPS). An RNA-binding region spans residues 52–194 (QQPSGGTVVP…GYYIEGSGRS (143 aa)). Residues 61-190 (PYYSWFSGIT…VLPQGYYIEG (130 aa)) form the CoV N NTD domain. RNA-binding residues include Arg106, Arg122, and Arg164. Disordered stretches follow at residues 158-231 (PADI…VTPD), 266-297 (ILNKPRQKRSPNKQCTVQQCFGKRGPNQNFGG), and 387-449 (MMNI…TSEI). Phosphoserine; by host is present on Ser167. At Thr174 the chain carries Phosphothreonine; by host. The residue at position 191 (Ser191) is a Phosphoserine; by host. Polar residues-rich tracts occupy residues 194–204 (SAPNSRSTSRA) and 212–227 (GSRSRANSGNRTSTPG). The region spanning 259-384 (AKEVRQKILN…QNLNAYQHQE (126 aa)) is the CoV N CTD domain. The span at 266 to 276 (ILNKPRQKRSP) shows a compositional bias: basic residues. Residues 266–385 (ILNKPRQKRS…NLNAYQHQED (120 aa)) form a dimerization region. At Ser391 the chain carries Phosphoserine; by host. The span at 400–410 (QKNGQVENDNV) shows a compositional bias: polar residues. Over residues 423 to 440 (KSRELTAEDISLLKKMDE) the composition is skewed to basic and acidic residues. Position 424 is a phosphoserine; by host (Ser424). Position 428 is a phosphothreonine; by host (Thr428).

This sequence belongs to the betacoronavirus nucleocapsid protein family. Homooligomer. Both monomeric and oligomeric forms interact with RNA. Interacts with protein M. Interacts with NSP3; this interaction serves to tether the genome to the newly translated replicase-transcriptase complex at a very early stage of infection. In terms of processing, ADP-ribosylated. The ADP-ribosylation is retained in the virion during infection. Phosphorylated on serine and threonine residues.

The protein localises to the virion. It localises to the host endoplasmic reticulum-Golgi intermediate compartment. Its subcellular location is the host Golgi apparatus. Its function is as follows. Packages the positive strand viral genome RNA into a helical ribonucleocapsid (RNP) and plays a fundamental role during virion assembly through its interactions with the viral genome and membrane protein M. Plays an important role in enhancing the efficiency of subgenomic viral RNA transcription as well as viral replication. The polypeptide is Nucleoprotein (Sus scrofa (Pig)).